The chain runs to 254 residues: tRNA (guanine-N(1)-)-methyltransferase (254 aa).

Residues Gly-113 and 133 to 138 (IGDYVL) contribute to the S-adenosyl-L-methionine site.

The protein belongs to the RNA methyltransferase TrmD family. Homodimer.

The protein localises to the cytoplasm. It carries out the reaction guanosine(37) in tRNA + S-adenosyl-L-methionine = N(1)-methylguanosine(37) in tRNA + S-adenosyl-L-homocysteine + H(+). In terms of biological role, specifically methylates guanosine-37 in various tRNAs. This is tRNA (guanine-N(1)-)-methyltransferase from Edwardsiella ictaluri (strain 93-146).